The sequence spans 736 residues: Transcription factor E2F8 (736 aa).

Residues 1 to 26 (MEEGSKENCGFNGSPMGSRSPPKQLT) form a disordered region. The segment covering 15–26 (PMGSRSPPKQLT) has biased composition (polar residues). DNA-binding regions lie at residues 98 to 167 (RKEK…IWHG) and 240 to 326 (RKEK…QWTC). Disordered stretches follow at residues 386–405 (RRKI…GSSS), 435–456 (SACK…QTPT), 483–551 (EQTL…AVDD), and 716–736 (PGGM…GTDD). Low complexity predominate over residues 393 to 405 (PSSPIKSGDGSSS). Composition is skewed to basic and acidic residues over residues 509–539 (GRHE…DRGC) and 726–736 (SARKLDVGTDD).

Belongs to the E2F/DP family. As to quaternary structure, homodimer and heterodimer: mainly forms homodimers and, to a lesser extent, heterodimers with e2f7.

The protein localises to the nucleus. Atypical E2F transcription factor that participates in various processes such as angiogenesis and polyploidization of specialized cells. Mainly acts as a transcription repressor that binds DNA independently of DP proteins and specifically recognizes the E2 recognition site 5'-TTTC[CG]CGC-3'. Directly represses transcription of classical E2F transcription factors such as e2f1. Acts as a regulator of S-phase by recognizing and binding the E2-related site 5'-TTCCCGCC-3' and mediating repression of G1/S-regulated genes. Acts as a promoter of sprouting angiogenesis, possibly by acting as a transcription activator. The chain is Transcription factor E2F8 (e2f8) from Xenopus tropicalis (Western clawed frog).